The primary structure comprises 227 residues: MVEVKKHKFPGVYIVIDDDGSEKIATKNLVPGQRVYGERVIKWEGEEYRIWNPHRSKLGAAIMNGLKNFPIKPGKSVLYLGIASGTTASHVSDVIGWEGKIFGIEFSPRVLRELVPIVEDRKNIVPILGDATKPEEYRALVPKVDVIFEDVAQPTQAKILIDNAEVYLKKGGYGMIAVKSRSIDVTKEPEQVFREVEKELSEYFEVIERLNLEPYEKDHALFVVRKT.

S-adenosyl-L-methionine-binding positions include 86–87, 105–106, 130–131, and 150–153; these read TT, EF, DA, and DVAQ.

Belongs to the methyltransferase superfamily. Fibrillarin family. In terms of assembly, interacts with nop5. Component of box C/D small ribonucleoprotein (sRNP) particles that contain rpl7ae, FlpA and nop5, plus a guide RNA.

Involved in pre-rRNA and tRNA processing. Utilizes the methyl donor S-adenosyl-L-methionine to catalyze the site-specific 2'-hydroxyl methylation of ribose moieties in rRNA and tRNA. Site specificity is provided by a guide RNA that base pairs with the substrate. Methylation occurs at a characteristic distance from the sequence involved in base pairing with the guide RNA. This is Fibrillarin-like rRNA/tRNA 2'-O-methyltransferase from Pyrococcus abyssi (strain GE5 / Orsay).